Consider the following 606-residue polypeptide: MGMWEEASDTGMKGKKKKKDKNEEEEERGKKERMVNLTLEMIYLLTGEHYIPRKKSDDGGALHAPGSVIQKENNKNDKKILELMSNIIQLLTGEVAIRTHHVSIYFSLDEWDYIKGNKDLYEDGMKEEPQQLHPLAVCEYKDESNVTAHMESTLGCNNDGNLTKMSPVEQPPPANGIKEEVASCEEINQSDCSINPFTEQIQGTDTPTPIMGCSHFKTKVNKYDINSYWSPDESGITKSTLHSKDSCNEGHKHLSHKSDYNKHQNPHKRQKSFSCSKCGKCFSNLTSLHCHQKTHKGKKLLCLKCGKCFATSSKLIIHRQTHMDKKHFSCSECRICFSKQSSLARHQITHTEEKPLASSECGKCFASLSELTVHQRTNTGEKHDFCSECGKCFATSSQLIAHQQQVHIEVKPFSCTKCGKCFSYRSRLVRHQRTHTGVKPYSCSECGKCFASSSHLIGHRQQVHMEGKTFFCSECGKYFLYQSQLVRHQRTHTGEKPYSCSECGKCFATSSQLMAHQQQVHIEVKPFSCSECGKYFLYRAHLVRHQRTHTGEKPDFCFECGKCFATSLQLIAHQQQVHMEVKQFSCSECGKSFLYRSHLARHHRTH.

Disordered regions lie at residues 1–31 and 240–271; these read MGMWEEASDTGMKGKKKKKDKNEEEEERGKK and TLHSKDSCNEGHKHLSHKSDYNKHQNPHKRQK. The segment covering 242-262 has biased composition (basic and acidic residues); that stretch reads HSKDSCNEGHKHLSHKSDYNK. C2H2-type zinc fingers lie at residues 273-295, 300-322, 328-350, 384-407, 413-435, 441-464, 470-492, 498-521, 527-549, 555-578, and 584-606; these read FSCSKCGKCFSNLTSLHCHQKTH, LLCLKCGKCFATSSKLIIHRQTH, FSCSECRICFSKQSSLARHQITH, DFCSECGKCFATSSQLIAHQQQVH, FSCTKCGKCFSYRSRLVRHQRTH, YSCSECGKCFASSSHLIGHRQQVH, FFCSECGKYFLYQSQLVRHQRTH, YSCSECGKCFATSSQLMAHQQQVH, FSCSECGKYFLYRAHLVRHQRTH, DFCFECGKCFATSLQLIAHQQQVH, and FSCSECGKSFLYRSHLARHHRTH.

It belongs to the krueppel C2H2-type zinc-finger protein family.

Its subcellular location is the nucleus. Functionally, may be involved in transcriptional regulation. This chain is Gastrula zinc finger protein XlCGF66.1, found in Xenopus laevis (African clawed frog).